Here is an 89-residue protein sequence, read N- to C-terminus: Small ribosomal subunit protein uS15 (89 aa).

The protein belongs to the universal ribosomal protein uS15 family. In terms of assembly, part of the 30S ribosomal subunit. Forms a bridge to the 50S subunit in the 70S ribosome, contacting the 23S rRNA.

Functionally, one of the primary rRNA binding proteins, it binds directly to 16S rRNA where it helps nucleate assembly of the platform of the 30S subunit by binding and bridging several RNA helices of the 16S rRNA. Its function is as follows. Forms an intersubunit bridge (bridge B4) with the 23S rRNA of the 50S subunit in the ribosome. In Carboxydothermus hydrogenoformans (strain ATCC BAA-161 / DSM 6008 / Z-2901), this protein is Small ribosomal subunit protein uS15.